The primary structure comprises 74 residues: Small ribosomal subunit protein bS18 (74 aa).

The protein belongs to the bacterial ribosomal protein bS18 family. In terms of assembly, part of the 30S ribosomal subunit. Forms a tight heterodimer with protein bS6.

Binds as a heterodimer with protein bS6 to the central domain of the 16S rRNA, where it helps stabilize the platform of the 30S subunit. The protein is Small ribosomal subunit protein bS18 of Zymomonas mobilis subsp. mobilis (strain ATCC 31821 / ZM4 / CP4).